The chain runs to 568 residues: Type 3 secretion system secretin (568 aa).

The first 15 residues, 1–15 (MAAALLLWTAGTVCA), serve as a signal peptide directing secretion. A disordered region spans residues 203–292 (YGGDGPSDSG…RGSTPIIRAD (90 aa)). Residues 243–257 (LGGGKSPLPPGGTGQ) show a composition bias toward gly residues. Positions 273-284 (NRLRSDELDDRG) are enriched in basic and acidic residues.

It belongs to the bacterial secretin family. T3SS SctC subfamily. As to quaternary structure, the core secretion machinery of the T3SS is composed of approximately 20 different proteins, including cytoplasmic components, a base, an export apparatus and a needle. This subunit is part of the base, which anchors the injectisome in the bacterial cell envelope. Forms a stable homooligomeric complex.

It localises to the cell outer membrane. Component of the type III secretion system (T3SS), also called injectisome, which is used to inject bacterial effector proteins into eukaryotic host cells. Forms a ring-shaped multimeric structure with an apparent central pore in the outer membrane. In Ralstonia nicotianae (strain ATCC BAA-1114 / GMI1000) (Ralstonia solanacearum), this protein is Type 3 secretion system secretin.